The following is a 601-amino-acid chain: Zinc finger CCCH domain-containing protein 33 (601 aa).

ANK repeat units lie at residues 71–101 (ERRT…EAAR) and 106–138 (DGAT…SVDA). The segment covering 167–180 (PAVSPSSSPKKSAS) has biased composition (low complexity). Residues 167–203 (PAVSPSSSPKKSASPPSPPPPQEAKKEYPPDLTLPDL) form a disordered region. 2 consecutive C3H1-type zinc fingers follow at residues 252–280 (SYSC…HGVF) and 288–312 (QYRT…HKPD).

The protein is Zinc finger CCCH domain-containing protein 33 of Oryza sativa subsp. japonica (Rice).